The following is a 580-amino-acid chain: MTNHEQVLTDYLAAFIEELVQAGVKEAIISPGSRSTPLALMMAEHPILKIYVDVDERSAGFFALGLAKASKRPVVLLCTSGTAAANYFPAVAEANLSQIPLIVLTADRPHELRNVGAPQAMDQLHLYGSHVKDFTDMALPENSEEMLRYAKWHGSRAVDIAMKTPRGPVHLNFPLREPLVPILEPSPFTATGKKHHHVHIYYTHEVLDDSSIQKMVTECTGKKGVFVVGPIDKKELEQPMVDLAKKLGWPILADPLSGLRSYGALDEVVIDQYDAFLKEAEIIDKLTPEVVIRFGSMPVSKPLKNWLEQLSDIRFYVVDPGAAWKDPIKAVTDMIHCDERFLLDIMQQNMPDDAKDAAWLNGWTSYNKVAREIVLAEMANTTILEEGKIVAELRRLLPDKAGLFIGNSMPIRDVDTYFSQIDKKIKMLANRGANGIDGVVSSALGASVVFQPMFLLIGDLSFYHDMNGLLMAKKYKMNLTIVIVNNDGGGIFSFLPQANEPKYFESLFGTSTELDFRFAAAFYDADYHEAKSVDELEEAIDKASYHKGLDIIEVKTNRHENKANHQALWVKIADALKALD.

The protein belongs to the TPP enzyme family. MenD subfamily. In terms of assembly, homodimer. Mg(2+) is required as a cofactor. Mn(2+) serves as cofactor. It depends on thiamine diphosphate as a cofactor.

It carries out the reaction isochorismate + 2-oxoglutarate + H(+) = 5-enolpyruvoyl-6-hydroxy-2-succinyl-cyclohex-3-ene-1-carboxylate + CO2. It functions in the pathway quinol/quinone metabolism; 1,4-dihydroxy-2-naphthoate biosynthesis; 1,4-dihydroxy-2-naphthoate from chorismate: step 2/7. It participates in quinol/quinone metabolism; menaquinone biosynthesis. In terms of biological role, catalyzes the thiamine diphosphate-dependent decarboxylation of 2-oxoglutarate and the subsequent addition of the resulting succinic semialdehyde-thiamine pyrophosphate anion to isochorismate to yield 2-succinyl-5-enolpyruvyl-6-hydroxy-3-cyclohexene-1-carboxylate (SEPHCHC). The chain is 2-succinyl-5-enolpyruvyl-6-hydroxy-3-cyclohexene-1-carboxylate synthase from Listeria monocytogenes serotype 4b (strain F2365).